Here is a 436-residue protein sequence, read N- to C-terminus: Indole-3-acetyl-aspartic acid hydrolase (436 aa).

Belongs to the peptidase M20 family. Monomer.

It carries out the reaction (indol-3-yl)acetyl-L-aspartate + H2O = (indol-3-yl)acetate + L-aspartate. Its function is as follows. Hydrolyzes indole-3-acetyl-aspartate (IAA-Asp) to indole-3-acetic acid (IAA). Shows an exclusively high substrate specificity for IAA-Asp. This chain is Indole-3-acetyl-aspartic acid hydrolase, found in Enterobacter agglomerans (Erwinia herbicola).